A 118-amino-acid chain; its full sequence is UPF0342 protein BAMEG_3696 (118 aa).

The protein belongs to the UPF0342 family.

The sequence is that of UPF0342 protein BAMEG_3696 from Bacillus anthracis (strain CDC 684 / NRRL 3495).